The chain runs to 485 residues: NADH-quinone oxidoreductase subunit N (485 aa).

A run of 14 helical transmembrane segments spans residues L8–I28, F35–V55, G71–A91, F105–L125, A127–F147, Y159–A179, L203–F223, P235–M255, V271–Q291, L297–Q317, V326–L346, A373–I393, W408–V430, and I455–I475.

The protein belongs to the complex I subunit 2 family. NDH-1 is composed of 13 different subunits. Subunits NuoA, H, J, K, L, M, N constitute the membrane sector of the complex.

It is found in the cell inner membrane. The enzyme catalyses a quinone + NADH + 5 H(+)(in) = a quinol + NAD(+) + 4 H(+)(out). Functionally, NDH-1 shuttles electrons from NADH, via FMN and iron-sulfur (Fe-S) centers, to quinones in the respiratory chain. The immediate electron acceptor for the enzyme in this species is believed to be ubiquinone. Couples the redox reaction to proton translocation (for every two electrons transferred, four hydrogen ions are translocated across the cytoplasmic membrane), and thus conserves the redox energy in a proton gradient. The chain is NADH-quinone oxidoreductase subunit N from Salmonella typhimurium (strain LT2 / SGSC1412 / ATCC 700720).